The primary structure comprises 1430 residues: Bromodomain-containing protein homolog (1430 aa).

The C2H2-type zinc-finger motif lies at 23–49 (FACPVRGCDRSYKTIMGLQYHLMKYDH). Positions 51–111 (NPQPLTPVLT…AGGGSASGVS (61 aa)) are disordered. Basic residues predominate over residues 62-81 (SRKKARSRSGGHHSTPRPHK). The PHD-type 1 zinc finger occupies 283–333 (DAVCCICLDGECQNTNVILFCDMCNLAVHQDCYGVPYIPEGQWLCRRCLQS). Zn(2+) contacts are provided by Cys286, Cys289, Cys303, Cys306, His311, Cys314, Cys327, and Cys330. The C2HC pre-PHD-type zinc finger occupies 337 to 370 (PVNCVLCPNAGGAFKQTDHGQWAHVVCALWIPEV). The segment at 394-457 (LTCYVCKEKG…QKFAYCHAHT (64 aa)) adopts a PHD-type 2 zinc-finger fold. A Bromo domain is found at 611 to 715 (LQLNPLEAAL…DQAAPLFVQV (105 aa)). Positions 796 to 805 (KARFAARHSS) are enriched in basic residues. Disordered stretches follow at residues 796-887 (KARF…SSPV), 901-942 (AQAA…TTAA), 1012-1054 (ANLP…QALP), and 1076-1301 (QRDV…GQKP). The span at 842-857 (HDDDDEEEDSDEDSMG) shows a compositional bias: acidic residues. Over residues 865–887 (LLNSTQTPPCSPIKSLNNSSSPV) the composition is skewed to polar residues. 3 stretches are compositionally biased toward low complexity: residues 922 to 942 (NSQS…TTAA), 1034 to 1043 (SSSMSPKKSP), and 1085 to 1107 (APSQ…SCSD). Positions 1108 to 1120 (FDSDEASEGDADG) are enriched in acidic residues. Basic and acidic residues predominate over residues 1121-1137 (DPDRDGGRSRSEERDST). Polar residues-rich tracts occupy residues 1151-1165 (ASLN…NMAI) and 1265-1278 (NTTA…TNNN). Residues 1281–1293 (KHSEDSASSERHN) are compositionally biased toward basic and acidic residues. The PWWP domain occupies 1305–1378 (PLQLVWAKCR…TWQWLPANKL (74 aa)).

Component of the Enok complex composed of at least Br140, enok, Eaf6 and Ing5. As part of the Enok complex, interacts with elg1 and the Elg1 RFC-like complex.

Its subcellular location is the nucleus. In terms of biological role, scaffold subunit of the histone acetyltransferase (HAT) Enok complex which has histone H3 acetyltransferase activity. As part of the Enok complex, associates with the Elg1 RFC-like complex and down-regulates its PCNA-unloading function to promote the G1/S transition. May also play a role in maintaining the protein levels and stability of enok. This is Bromodomain-containing protein homolog from Drosophila melanogaster (Fruit fly).